The sequence spans 634 residues: Microtubule-associated protein 70-2 (634 aa).

Residues 1–57 (MSDVSGDGDLSATVTEHEVTPQPPVSSATYPSLTVSASYKESSGGKSSSKRRPIRPS) form a disordered region. Positions 25–35 (VSSATYPSLTV) are enriched in polar residues. The span at 36-47 (SASYKESSGGKS) shows a compositional bias: low complexity. Positions 74-392 (DPVKVELNRL…LRLKVLEETL (319 aa)) form a coiled coil. Residues 258-494 (ILDRMHRQKV…YSFNKATDDS (237 aa)) are required for targeting to microtubules. 2 stretches are compositionally biased toward polar residues: residues 393 to 417 (RGTS…SRRQ) and 443 to 464 (MRHS…TSKS). Disordered stretches follow at residues 393–526 (RGTS…SVPG) and 594–634 (VEKD…KSTQ). A coiled-coil region spans residues 532–601 (LQKEVVSLRK…MRVEKDQDAR (70 aa)). Positions 605–616 (FSNSKSPSNTAQ) are enriched in polar residues.

It belongs to the MAP70 family.

It localises to the cytoplasm. The protein resides in the cytoskeleton. Plant-specific protein that interact with microtubules. The protein is Microtubule-associated protein 70-2 (MAP70.2) of Arabidopsis thaliana (Mouse-ear cress).